We begin with the raw amino-acid sequence, 382 residues long: MPMRIERDLHMAIGNGETSYTKNSRIQEKAMFQMKSVLEEATRAVCTTLLPQTMVVADLGCSSGPNTLRFVTEVTRIIAHHCKLEHNRRHDHLPQLQFFLNDLPGNDFNNLFQLIEQFNKSSTTHKGDAATEALQPPCYISGLPGSYYTRIFPSESVHLFHSLFCLQWRSQAPEQLKGTQKSCLDIYITKTMSPSMVKLFQQQFQKDFSLFLRLRYEELVSGGQMVLTFIGRKHEDVFTGESNHLYGLLAQSLKSLVDEGLVEKEKLESFYLPIYSPSVGEVEAIVKQLGLFNMNHVKVFEINWDPYDDSEGDDVHNSIESGENVAKCLRAVMEPLVASQFGERILDELFKEYARRVAKHLENEKTKHAVLVLSIEKAIIHV.

Y20 contacts S-adenosyl-L-homocysteine. Q27 provides a ligand contact to anthranilate. Positions 61, 66, 102, 103, 146, and 147 each coordinate S-adenosyl-L-homocysteine. W168 serves as a coordination point for anthranilate. E268 and F270 together coordinate Mg(2+).

Belongs to the methyltransferase superfamily. Type-7 methyltransferase family. SABATH subfamily.

It catalyses the reaction anthranilate + S-adenosyl-L-methionine = O-methyl anthranilate + S-adenosyl-L-homocysteine. Methyltransferase involved in the biosynthesis of methyl anthranilate in response to stresses. Utilizes anthranilic acid as substrate, but not salicylic acid. Produces exclusively the O-methyl ester. The chain is Anthranilate O-methyltransferase 1 (AAMT1) from Zea mays (Maize).